We begin with the raw amino-acid sequence, 265 residues long: Hydroxyethylthiazole kinase (265 aa).

M43 lines the substrate pocket. Residues R119 and S165 each contribute to the ATP site. A192 provides a ligand contact to substrate.

This sequence belongs to the Thz kinase family. Requires Mg(2+) as cofactor.

It carries out the reaction 5-(2-hydroxyethyl)-4-methylthiazole + ATP = 4-methyl-5-(2-phosphooxyethyl)-thiazole + ADP + H(+). The protein operates within cofactor biosynthesis; thiamine diphosphate biosynthesis; 4-methyl-5-(2-phosphoethyl)-thiazole from 5-(2-hydroxyethyl)-4-methylthiazole: step 1/1. In terms of biological role, catalyzes the phosphorylation of the hydroxyl group of 4-methyl-5-beta-hydroxyethylthiazole (THZ). In Haemophilus influenzae (strain 86-028NP), this protein is Hydroxyethylthiazole kinase.